The chain runs to 65 residues: DNA-directed RNA polymerase subunit omega (65 aa).

The protein belongs to the RNA polymerase subunit omega family. The RNAP catalytic core consists of 2 alpha, 1 beta, 1 beta' and 1 omega subunit. When a sigma factor is associated with the core the holoenzyme is formed, which can initiate transcription.

It carries out the reaction RNA(n) + a ribonucleoside 5'-triphosphate = RNA(n+1) + diphosphate. Functionally, promotes RNA polymerase assembly. Latches the N- and C-terminal regions of the beta' subunit thereby facilitating its interaction with the beta and alpha subunits. This chain is DNA-directed RNA polymerase subunit omega, found in Baumannia cicadellinicola subsp. Homalodisca coagulata.